The primary structure comprises 451 residues: MENIDDLWNKVLEEMKKKVSKPSYETWLRATKANALQNNDTIIVTAPNEFARDWLEDHYSGLTSDIIEQLTGARLTPKFVIPQHNQEEEALPEQTPQTPPEKDVAGQSTLSQTMLNDKYTFNTFVIGSGNRFAHAASLAVAEAPARAYNPLFIYGGVGLGKTHLMHAIGHYVMEHNPNAKVVYLSSEKFTNEFINAIRDNKAVHFRNKYRNVDVLLIDDIQFIAGKIQTQEEFFHTFNALHEESKQIVISSDRPPKEIPTLEDRLRSRFEWGLITDITPPDLETRIAILRKKAKAENLDIPNEVMLYIANQIDTNIRELEGALIRVVAYSSLINQDMNADLAAEALKDIIPNAMPKTLTITDIQKLVGEHFQVKLEDFKAKKRTKSVAFPRQIAMYLSREMTDASLPKIGSEFGGRDHTTVIHAHEKISKLLATDQELQQKVQAITEQLRQ.

The segment at 1 to 93 (MENIDDLWNK…HNQEEEALPE (93 aa)) is domain I, interacts with DnaA modulators. The interval 88–108 (EEALPEQTPQTPPEKDVAGQS) is disordered. A domain II region spans residues 94-113 (QTPQTPPEKDVAGQSTLSQT). The domain III, AAA+ region stretch occupies residues 114 to 330 (MLNDKYTFNT…GALIRVVAYS (217 aa)). ATP-binding residues include G158, G160, K161, and T162. A domain IV, binds dsDNA region spans residues 331–451 (SLINQDMNAD…VQAITEQLRQ (121 aa)).

The protein belongs to the DnaA family. In terms of assembly, oligomerizes as a right-handed, spiral filament on DNA at oriC.

The protein localises to the cytoplasm. Its function is as follows. Plays an essential role in the initiation and regulation of chromosomal replication. ATP-DnaA binds to the origin of replication (oriC) to initiate formation of the DNA replication initiation complex once per cell cycle. Binds the DnaA box (a 9 base pair repeat at the origin) and separates the double-stranded (ds)DNA. Forms a right-handed helical filament on oriC DNA; dsDNA binds to the exterior of the filament while single-stranded (ss)DNA is stabiized in the filament's interior. The ATP-DnaA-oriC complex binds and stabilizes one strand of the AT-rich DNA unwinding element (DUE), permitting loading of DNA polymerase. After initiation quickly degrades to an ADP-DnaA complex that is not apt for DNA replication. Binds acidic phospholipids. This chain is Chromosomal replication initiator protein DnaA, found in Shouchella clausii (strain KSM-K16) (Alkalihalobacillus clausii).